We begin with the raw amino-acid sequence, 761 residues long: Polyribonucleotide nucleotidyltransferase (761 aa).

Mg(2+) is bound by residues Asp532 and Asp538. Residues 598–657 (PRVISVQIPVDKIGELIGPKGKTINAIQDETGADISIDEDGTVYIGAVDGPSAEAARAQV) enclose the KH domain. An S1 motif domain is found at 669–741 (GEQFLGTVVK…DRGKLSLAPV (73 aa)).

Belongs to the polyribonucleotide nucleotidyltransferase family. The cofactor is Mg(2+).

The protein resides in the cytoplasm. It catalyses the reaction RNA(n+1) + phosphate = RNA(n) + a ribonucleoside 5'-diphosphate. Functionally, involved in mRNA degradation. Catalyzes the phosphorolysis of single-stranded polyribonucleotides processively in the 3'- to 5'-direction. In Leifsonia xyli subsp. xyli (strain CTCB07), this protein is Polyribonucleotide nucleotidyltransferase.